The chain runs to 427 residues: Adenylosuccinate synthetase (427 aa).

GTP-binding positions include 12-18 (GDEGKGK) and 40-42 (GHT). Residue Asp-13 is the Proton acceptor of the active site. Asp-13 and Gly-40 together coordinate Mg(2+). IMP is bound by residues 13–16 (DEGK), 38–41 (NAGH), Thr-128, Arg-142, Gln-223, Thr-238, and Arg-302. His-41 acts as the Proton donor in catalysis. 298–304 (TVTGRAR) contributes to the substrate binding site. GTP is bound by residues Arg-304, 330-332 (RLD), and 412-414 (SVG).

The protein belongs to the adenylosuccinate synthetase family. Homodimer. It depends on Mg(2+) as a cofactor.

Its subcellular location is the cytoplasm. It catalyses the reaction IMP + L-aspartate + GTP = N(6)-(1,2-dicarboxyethyl)-AMP + GDP + phosphate + 2 H(+). It participates in purine metabolism; AMP biosynthesis via de novo pathway; AMP from IMP: step 1/2. In terms of biological role, plays an important role in the de novo pathway of purine nucleotide biosynthesis. Catalyzes the first committed step in the biosynthesis of AMP from IMP. This chain is Adenylosuccinate synthetase, found in Brachyspira hyodysenteriae (strain ATCC 49526 / WA1).